The chain runs to 98 residues: Signal peptidase complex subunit 1 (98 aa).

At 1–18 (MLDIQTHMDFAGQGKAER) the chain is on the cytoplasmic side. A helical transmembrane segment spans residues 19–38 (WSRFIITFFGIVGLVYGAFV). Topologically, residues 39–42 (QQFS) are lumenal. Residues 43 to 65 (QTVYILGAGFVLSSLITIPPWPL) form a helical membrane-spanning segment. Residues 66 to 98 (YRRNALKWQKPIDTDAKSSSSESGDEGKKKKKQ) lie on the Cytoplasmic side of the membrane. A disordered region spans residues 78–98 (DTDAKSSSSESGDEGKKKKKQ). Phosphoserine is present on residues Ser-84, Ser-85, Ser-86, and Ser-88.

It belongs to the SPCS1 family. Component of the signal peptidase complex (SPC) composed of a catalytic subunit twr/SEC11 and three accessory subunits Spase12/SPCS1, Spase25/SPCS2 and Spase22-23/SPCS3. The complex induces a local thinning of the ER membrane which is used to measure the length of the signal peptide (SP) h-region of protein substrates. This ensures the selectivity of the complex towards h-regions shorter than 18-20 amino acids.

The protein localises to the endoplasmic reticulum membrane. In terms of biological role, component of the signal peptidase complex (SPC) which catalyzes the cleavage of N-terminal signal sequences from nascent proteins as they are translocated into the lumen of the endoplasmic reticulum. Dispensable for SPC enzymatic activity. Its function is as follows. (Microbial infection) Plays an important role in infection by flaviviruses such as West Nile virus and Dengue virus type 2. The polypeptide is Signal peptidase complex subunit 1 (Spase12) (Drosophila melanogaster (Fruit fly)).